The following is a 453-amino-acid chain: Ribulose bisphosphate carboxylase large chain (453 aa).

A propeptide spanning residues 1–2 is cleaved from the precursor; sequence MS. An N-acetylproline modification is found at Pro3. Residue Lys14 is modified to N6,N6,N6-trimethyllysine. 2 residues coordinate substrate: Asn123 and Thr173. Lys175 serves as the catalytic Proton acceptor. A substrate-binding site is contributed by Lys177. The Mg(2+) site is built by Lys201, Asp203, and Glu204. Lys201 carries the post-translational modification N6-carboxylysine. The active-site Proton acceptor is His294. Arg295, His327, and Ser379 together coordinate substrate.

This sequence belongs to the RuBisCO large chain family. Type I subfamily. Heterohexadecamer of 8 large chains and 8 small chains; disulfide-linked. The disulfide link is formed within the large subunit homodimers. Requires Mg(2+) as cofactor. The disulfide bond which can form in the large chain dimeric partners within the hexadecamer appears to be associated with oxidative stress and protein turnover.

It is found in the plastid. The protein localises to the chloroplast. The enzyme catalyses 2 (2R)-3-phosphoglycerate + 2 H(+) = D-ribulose 1,5-bisphosphate + CO2 + H2O. It carries out the reaction D-ribulose 1,5-bisphosphate + O2 = 2-phosphoglycolate + (2R)-3-phosphoglycerate + 2 H(+). Its function is as follows. RuBisCO catalyzes two reactions: the carboxylation of D-ribulose 1,5-bisphosphate, the primary event in carbon dioxide fixation, as well as the oxidative fragmentation of the pentose substrate in the photorespiration process. Both reactions occur simultaneously and in competition at the same active site. This chain is Ribulose bisphosphate carboxylase large chain, found in Cruciata glabra (Slender crosswort).